The sequence spans 119 residues: Holo-[acyl-carrier-protein] synthase (119 aa).

Positions 7 and 53 each coordinate Mg(2+).

Belongs to the P-Pant transferase superfamily. AcpS family. Requires Mg(2+) as cofactor.

The protein localises to the cytoplasm. The catalysed reaction is apo-[ACP] + CoA = holo-[ACP] + adenosine 3',5'-bisphosphate + H(+). In terms of biological role, transfers the 4'-phosphopantetheine moiety from coenzyme A to a Ser of acyl-carrier-protein. This chain is Holo-[acyl-carrier-protein] synthase, found in Dehalococcoides mccartyi (strain CBDB1).